The following is a 250-amino-acid chain: NH(3)-dependent NAD(+) synthetase (250 aa).

31 to 38 (GISGGIDS) contributes to the ATP binding site. Asp37 lines the Mg(2+) pocket. Residue Arg122 participates in deamido-NAD(+) binding. Residue Thr142 coordinates ATP. Glu147 lines the Mg(2+) pocket. Deamido-NAD(+) is bound by residues Lys155 and Asp162. Residues Lys171 and Ser193 each coordinate ATP. 239–240 (HK) lines the deamido-NAD(+) pocket.

Belongs to the NAD synthetase family. In terms of assembly, homodimer.

The catalysed reaction is deamido-NAD(+) + NH4(+) + ATP = AMP + diphosphate + NAD(+) + H(+). The protein operates within cofactor biosynthesis; NAD(+) biosynthesis; NAD(+) from deamido-NAD(+) (ammonia route): step 1/1. Functionally, catalyzes the ATP-dependent amidation of deamido-NAD to form NAD. Uses ammonia as a nitrogen source. This Alkaliphilus oremlandii (strain OhILAs) (Clostridium oremlandii (strain OhILAs)) protein is NH(3)-dependent NAD(+) synthetase.